A 794-amino-acid chain; its full sequence is Protein transport protein SEC23 G (794 aa).

Zn(2+) is bound by residues Cys56, Cys59, Cys78, and Cys81. A zinc finger-like region spans residues 56 to 81 (CSRCGAVLNPYARVDYQSRIWSCPFC).

This sequence belongs to the SEC23/SEC24 family. SEC23 subfamily. Component of the coat protein complex II (COPII), composed of at least five proteins: the Sec23/24 complex, the Sec13/31 complex and Sar1. Interacts with SEC24A.

The protein localises to the cytoplasmic vesicle. It localises to the COPII-coated vesicle membrane. It is found in the endoplasmic reticulum membrane. Its subcellular location is the membrane. In terms of biological role, component of the coat protein complex II (COPII) which promotes the formation of transport vesicles from the endoplasmic reticulum (ER). The coat has two main functions, the physical deformation of the endoplasmic reticulum membrane into vesicles and the selection of cargo molecules. This Arabidopsis thaliana (Mouse-ear cress) protein is Protein transport protein SEC23 G.